Reading from the N-terminus, the 170-residue chain is Adenine phosphoribosyltransferase (170 aa).

It belongs to the purine/pyrimidine phosphoribosyltransferase family. In terms of assembly, homodimer.

It localises to the cytoplasm. The enzyme catalyses AMP + diphosphate = 5-phospho-alpha-D-ribose 1-diphosphate + adenine. Its pathway is purine metabolism; AMP biosynthesis via salvage pathway; AMP from adenine: step 1/1. Its function is as follows. Catalyzes a salvage reaction resulting in the formation of AMP, that is energically less costly than de novo synthesis. In Thermotoga sp. (strain RQ2), this protein is Adenine phosphoribosyltransferase.